Reading from the N-terminus, the 467-residue chain is Probable protein phosphatase 2C 6 (467 aa).

The disordered stretch occupies residues 61–81 (VEDDAVAPGRGEEGGEASAVG). A PPM-type phosphatase domain is found at 149-457 (LWGHKSICGR…DNISVIVVDL (309 aa)). Mn(2+) contacts are provided by D205, G206, D386, and D448.

The protein belongs to the PP2C family. Interacts with PYL9. The cofactor is Mg(2+). It depends on Mn(2+) as a cofactor.

It localises to the nucleus. It is found in the cytoplasm. Its subcellular location is the cytosol. It catalyses the reaction O-phospho-L-seryl-[protein] + H2O = L-seryl-[protein] + phosphate. The catalysed reaction is O-phospho-L-threonyl-[protein] + H2O = L-threonyl-[protein] + phosphate. Probable protein phosphatase that may function in abscisic acid (ABA) signaling. In Oryza sativa subsp. japonica (Rice), this protein is Probable protein phosphatase 2C 6.